Consider the following 74-residue polypeptide: Anionic peptide clone 10 (74 aa).

Residues 1 to 24 (MVSKSLIVLLLVSVLVSTFFTTEA) form the signal peptide.

It belongs to the non-disulfide-bridged peptide (NDBP) superfamily. Long chain multifunctional peptide (group 2) family. As to expression, expressed by the venom gland.

Its subcellular location is the secreted. May be an antimicrobial peptide. This chain is Anionic peptide clone 10, found in Tityus costatus (Brazilian scorpion).